We begin with the raw amino-acid sequence, 438 residues long: V-type ATP synthase beta chain (438 aa).

Belongs to the ATPase alpha/beta chains family.

Functionally, produces ATP from ADP in the presence of a proton gradient across the membrane. The V-type beta chain is a regulatory subunit. The chain is V-type ATP synthase beta chain from Protochlamydia amoebophila (strain UWE25).